We begin with the raw amino-acid sequence, 184 residues long: Elongation factor P (184 aa).

The protein belongs to the elongation factor P family.

The protein localises to the cytoplasm. It participates in protein biosynthesis; polypeptide chain elongation. Functionally, involved in peptide bond synthesis. Stimulates efficient translation and peptide-bond synthesis on native or reconstituted 70S ribosomes in vitro. Probably functions indirectly by altering the affinity of the ribosome for aminoacyl-tRNA, thus increasing their reactivity as acceptors for peptidyl transferase. The polypeptide is Elongation factor P (Delftia acidovorans (strain DSM 14801 / SPH-1)).